The sequence spans 238 residues: Uridylate kinase (238 aa).

Residue 10-13 participates in ATP binding; that stretch reads KFSG. Positions 18–23 are involved in allosteric activation by GTP; sequence GDSGFG. Residue G52 coordinates UMP. Positions 53 and 57 each coordinate ATP. UMP contacts are provided by residues D73 and 134–141; that span reads TGNPFFTT. ATP is bound by residues T161, Y167, and D170.

Belongs to the UMP kinase family. In terms of assembly, homohexamer.

It localises to the cytoplasm. It carries out the reaction UMP + ATP = UDP + ADP. The protein operates within pyrimidine metabolism; CTP biosynthesis via de novo pathway; UDP from UMP (UMPK route): step 1/1. With respect to regulation, allosterically activated by GTP. Inhibited by UTP. Catalyzes the reversible phosphorylation of UMP to UDP. The chain is Uridylate kinase from Campylobacter curvus (strain 525.92).